The sequence spans 545 residues: Chaperonin GroEL (545 aa).

ATP is bound by residues 29-32, K50, 86-90, G415, and D495; these read TLGP and DGTTT.

Belongs to the chaperonin (HSP60) family. Forms a cylinder of 14 subunits composed of two heptameric rings stacked back-to-back. Interacts with the co-chaperonin GroES.

It localises to the cytoplasm. It carries out the reaction ATP + H2O + a folded polypeptide = ADP + phosphate + an unfolded polypeptide.. Functionally, together with its co-chaperonin GroES, plays an essential role in assisting protein folding. The GroEL-GroES system forms a nano-cage that allows encapsulation of the non-native substrate proteins and provides a physical environment optimized to promote and accelerate protein folding. The polypeptide is Chaperonin GroEL (Bacteroides fragilis (strain ATCC 25285 / DSM 2151 / CCUG 4856 / JCM 11019 / LMG 10263 / NCTC 9343 / Onslow / VPI 2553 / EN-2)).